A 3678-amino-acid polypeptide reads, in one-letter code: MLWWEEVEDCYEREDVQKKTFTKWINAQFSKFGKQHIDNLFSDLQDGKRLLDLLEGLTGQKLPKEKGSTRVHALNNVNKALRVLQKNNVDLVNIGSTDIVDGNHKLTLGLIWNIILHWQVKNVMKTIMAGLQQTNSEKILLSWVRQSTRNYPQVNVINFTSSWSDGLALNALIHSHRPDLFDWNSVVSQHSATQRLEHAFNIAKCQLGIEKLLDPEDVATTYPDKKSILMYITSLFQVLPQQVSIEAIQEVEMLPRTSSKVTREEHFQLHHQMHYSQQITVSLAQGYEQTSSSPKPRFKSYAFTQAAYVATSDSTQSPYPSQHLEAPRDKSLDSSLMETEVNLDSYQTALEEVLSWLLSAEDTLRAQGEISNDVEEVKEQFHAHEGFMMDLTSHQGLVGNVLQLGSQLVGKGKLSEDEEAEVQEQMNLLNSRWECLRVASMEKQSKLHKVLMDLQNQKLKELDDWLTKTEERTKKMEEEPFGPDLEDLKCQVQQHKVLQEDLEQEQVRVNSLTHMVVVVDESSGDHATAALEEQLKVLGDRWANICRWTEDRWIVLQDILLKWQHFTEEQCLFSTWLSEKEDAMKNIQTSGFKDQNEMMSSLHKISTLKIDLEKKKPTMEKLSSLNQDLLSALKNKSVTQKMEIWMENFAQRWDNLTQKLEKSSAQISQAVTTTQPSLTQTTVMETVTMVTTREQIMVKHAQEELPPPPPQKKRQITVDSELRKRLDVDITELHSWITRSEAVLQSSEFAVYRKEGNISDLQEKVNAIAREKAEKFRKLQDASRSAQALVEQMANEGVNAESIRQASEQLNSRWTEFCQLLSERVNWLEYQTNIITFYNQLQQLEQMTTTAENLLKTQSTTLSEPTAIKSQLKICKDEVNRLSALQPQIEQLKIQSLQLKEKGQGPMFLDADFVAFTNHFNHIFDGVRAKEKELQTIFDTLPPMRYQETMSSIRTWIQQSESKLSVPYLSVTEYEIMEERLGKLQALQSSLKEQQNGFNYLSDTVKEMAKKAPSEICQKYLSEFEEIEGHWKKLSSQLVESCQKLEEHMNKLRKFQNHIKTLQKWMAEVDVFLKEEWPALGDAEILKKQLKQCRLLVGDIQTIQPSLNSVNEGGQKIKSEAELEFASRLETELRELNTQWDHICRQVYTRKEALKAGLDKTVSLQKDLSEMHEWMTQAEEEYLERDFEYKTPDELQTAVEEMKRAKEEALQKETKVKLLTETVNSVIAHAPPSAQEALKKELETLTTNYQWLCTRLNGKCKTLEEVWACWHELLSYLEKANKWLNEVELKLKTMENVPAGPEEITEVLESLENLMHHSEENPNQIRLLAQTLTDGGVMDELINEELETFNSRWRELHEEAVRKQKLLEQSIQSAQEIEKSLHLIQESLEFIDKQLAAYITDKVDAAQMPQEAQKIQSDLTSHEISLEEMKKHNQGKDANQRVLSQIDVAQKKLQDVSMKFRLFQKPANFEQRLEESKMILDEVKMHLPALETKSVEQEVIQSQLSHCVNLYKSLSEVKSEVEMVIKTGRQIVQKKQTENPKELDERVTALKLHYNELGAKVTERKQQLEKCLKLSRKMRKEMNVLTEWLAATDTELTKRSAVEGMPSNLDSEVAWGKATQKEIEKQKAHLKSVTELGESLKMVLGKKETLVEDKLSLLNSNWIAVTSRVEEWLNLLLEYQKHMETFDQNIEQITKWIIHADELLDESEKKKPQQKEDILKRLKAEMNDMRPKVDSTRDQAAKLMANRGDHCRKVVEPQISELNRRFAAISHRIKTGKASIPLKELEQFNSDIQKLLEPLEAEIQQGVNLKEEDFNKDMSEDNEGTVNELLQRGDNLQQRITDERKREEIKIKQQLLQTKHNALKDLRSQRRKKALEISHQWYQYKRQADDLLKCLDEIEKKLASLPEPRDERKLKEIDRELQKKKEELNAVRRQAEGLSENGAAMAVEPTQIQLSKRWRQIESNFAQFRRLNFAQIHTLHEETMVVTTEDMPLDVSYVPSTYLTEISHILQALSEVDHLLNTPELCAKDFEDLFKQEESLKNIKDNLQQISGRIDIIHKKKTAALQSATSMEKVKVQEAVAQMDFQGEKLHRMYKERQGRFDRSVEKWRHFHYDMKVFNQWLNEVEQFFKKTQNPENWEHAKYKWYLKELQDGIGQRQAVVRTLNATGEEIIQQSSKTDVNILQEKLGSLSLRWHDICKELAERRKRIEEQKNVLSEFQRDLNEFVLWLEEADNIAITPLGDEQQLKEQLEQVKLLAEELPLRQGILKQLNETGGAVLVSAPIRPEEQDKLEKKLKQTNLQWIKVSRALPEKQGELEVHLKDFRQLEEQLDHLLLWLSPIRNQLEIYNQPSQAGPFDIKEIEVTVHGKQADVERLLSKGQHLYKEKPSTQPVKRKLEDLRSEWEAVNHLLRELRTKQPDRAPGLSTTGASASQTVTLVTQSVVTKETVISKLEMPSSLLLEVPALADFNRAWTELTDWLSLLDRVIKSQRVMVGDLEDINEMIIKQKATLQDLEQRRPQLEELITAAQNLKNKTSNQEARTIITDRIERIQIQWDEVQEQLQNRRQQLNEMLKDSTQWLEAKEEAEQVIGQVRGKLDSWKEGPHTVDAIQKKITETKQLAKDLRQRQISVDVANDLALKLLRDYSADDTRKVHMITENINTSWGNIHKRVSEQEAALEETHRLLQQFPLDLEKFLSWITEAETTANVLQDASRKEKLLEDSRGVRELMKPWQDLQGEIETHTDIYHNLDENGQKILRSLEGSDEAPLLQRRLDNMNFKWSELQKKSLNIRSHLEASSDQWKRLHLSLQELLVWLQLKDDELSRQAPIGGDFPAVQKQNDIHRAFKRELKTKEPVIMSTLETVRIFLTEQPLEGLEKLYQEPRELPPEERAQNVTRLLRKQAEEVNAEWDKLNLRSADWQRKIDEALERLQELQEAADELDLKLRQAEVIKGSWQPVGDLLIDSLQDHLEKVKALRGEIAPLKENVNRVNDLAHQLTTLGIQLSPYNLSTLEDLNTRWRLLQVAVEDRVRQLHEAHRDFGPASQHFLSTSVQGPWERAISPNKVPYYINHETQTTCWDHPKMTELYQSLADLNNVRFSAYRTAMKLRRLQKALCLDLLSLSAACDALDQHNLKQNDQPMDILQIINCLTTIYDRLEQEHNNLVNVPLCVDMCLNWLLNVYDTGRTGRIRVLSFKTGIISLCKAHLEDKYRYLFKQVASSTGFCDQRRLGLLLHDSIQIPRQLGEVASFGGSNIEPSVRSCFQFANNKPEIEAALFLDWMRLEPQSMVWLPVLHRVAAAETAKHQAKCNICKECPIIGFRYRSLKHFNYDICQSCFFSGRVAKGHKMHYPMVEYCTPTTSGEDVRDFAKVLKNKFRTKRYFAKHPRMGYLPVQTVLEGDNMETPVTLINFWPVDSAPASSPQLSHDDTHSRIEHYASRLAEMENSNGSYLNDSISPNESIDDEHLLIQHYCQSLNQDSPLSQPRSPAQILISLESEERGELERILADLEEENRNLQAEYDRLKQQHEHKGLSPLPSPPEMMPTSPQSPRDAELIAEAKLLRQHKGRLEARMQILEDHNKQLESQLHRLRQLLEQPQAEAKVNGTTVSSPSTSLQRSDSSQPMLLRVVGSQTSESMGEEDLLSPPQDTSTGLEEVMEQLNNSFPSSRGRNAPGKPMREDTM.

The segment at 1 to 240 is actin-binding; that stretch reads MLWWEEVEDC…YITSLFQVLP (240 aa). Calponin-homology (CH) domains are found at residues 15–119 and 134–240; these read DVQK…LHWQ and TNSE…QVLP. The segment at 63–72 is ANK2- and ANK-3 binding; it reads PKEKGSTRVH. The tract at residues 313–333 is disordered; it reads DSTQSPYPSQHLEAPRDKSLD. 24 Spectrin repeats span residues 341–449, 450–558, 561–669, 721–830, 832–936, 945–1047, 1050–1156, 1159–1265, 1268–1369, 1370–1465, 1470–1570, 1573–1678, 1681–1780, 1781–1876, 1879–1981, 1994–2103, 2106–2210, 2213–2318, 2319–2416, 2468–2570, 2573–2679, 2682–2795, 2801–2923, and 2928–3033; these read VNLD…KLHK, VLMD…VLQD, LKWQ…QISQ, ELRK…WLEY, TNII…ELQT, RYQE…KLEE, NKLR…ALKA, DKTV…TLEE, ACWH…LLEQ, SIQS…LFQK, EQRL…QLEK, KLSR…LLLE, KHME…KASI, PLKE…KALE, HQWY…TLHE, DVSY…RFDR, EKWR…RIEE, NVLS…ELEV, HLKD…LRTK, FNRA…QLNE, KDST…ALEE, RLLQ…HLEA, KRLH…RKID, and RLQE…QLHE. The segment at 1417 to 1915 is interaction with SYNM; sequence SDLTSHEISL…PEPRDERKLK (499 aa). In terms of domain architecture, WW spans 3048–3081; sequence TSVQGPWERAISPNKVPYYINHETQTTCWDHPKM. The segment at 3051 to 3401 is interaction with SYNM; the sequence is QGPWERAISP…TVLEGDNMET (351 aa). The ZZ-type; degenerate zinc finger occupies 3301–3357; the sequence is KHQAKCNICKECPIIGFRYRSLKHFNYDICQSCFFSGRVAKGHKMHYPMVEYCTPTT. Residues cysteine 3306, cysteine 3309, cysteine 3330, and cysteine 3333 each contribute to the Zn(2+) site. A binds to SNTB1 region spans residues 3459–3511; it reads DDEHLLIQHYCQSLNQDSPLSQPRSPAQILISLESEERGELERILADLEEENR. Residues serine 3476, serine 3483, and serine 3493 each carry the phosphoserine modification. 2 disordered regions span residues 3521–3547 and 3596–3678; these read KQQH…QSPR and EAKV…EDTM. 2 stretches are compositionally biased toward polar residues: residues 3600–3619 and 3655–3665; these read NGTT…SSQP and QLNNSFPSSRG. Phosphoserine occurs at positions 3605, 3606, 3610, 3616, 3617, and 3659.

As to quaternary structure, interacts with SYNM. Interacts with the syntrophins SNTG1 and SNTG2. Interacts with KRT19. Component of the dystrophin-associated glycoprotein complex which is composed of three subcomplexes: a cytoplasmic complex comprised of DMD (or UTRN), DTNA and a number of syntrophins, such as SNTB1, SNTB2, SNTG1 and SNTG2, the transmembrane dystroglycan complex, and the sarcoglycan-sarcospan complex. Interacts with DAG1 (betaDAG1) with DMD; the interaction is inhibited by phosphorylation on the PPXY motif of DAG1. Interacts with SYNM; SNTA1 and SNTB1. Interacts with CMYA5. Directly interacts with ANK2 and ANK3; these interactions do not interfere with betaDAG1-binding and are necessary for proper localization in muscle cells. Identified in a dystroglycan complex that contains at least PRX, DRP2, UTRN, DMD and DAG1. Interacts with DTNB. Interacts with PGM5; the interaction is direct. Interacts with NOS1; localizes NOS1 to sarcolemma in muscle cells. In terms of tissue distribution, detected in quadriceps muscle and in sciatic nerve (at protein level). Expressed in the sarcolemma of the soleus muscle (at protein level). Differentially expressed during skeletal muscle, heart, and brain development. Also expressed in retina.

Its subcellular location is the cell membrane. It localises to the sarcolemma. The protein resides in the cytoplasm. It is found in the cytoskeleton. The protein localises to the postsynaptic cell membrane. Its function is as follows. Anchors the extracellular matrix to the cytoskeleton via F-actin. Ligand for dystroglycan. Component of the dystrophin-associated glycoprotein complex which accumulates at the neuromuscular junction (NMJ) and at a variety of synapses in the peripheral and central nervous systems and has a structural function in stabilizing the sarcolemma. Also implicated in signaling events and synaptic transmission. This is Dystrophin (Dmd) from Mus musculus (Mouse).